The primary structure comprises 444 residues: UDP-N-acetylmuramate--L-alanine ligase (444 aa).

110–116 (GAHGKTS) lines the ATP pocket.

Belongs to the MurCDEF family.

It is found in the cytoplasm. It carries out the reaction UDP-N-acetyl-alpha-D-muramate + L-alanine + ATP = UDP-N-acetyl-alpha-D-muramoyl-L-alanine + ADP + phosphate + H(+). It participates in cell wall biogenesis; peptidoglycan biosynthesis. Its function is as follows. Cell wall formation. In Streptococcus pneumoniae (strain JJA), this protein is UDP-N-acetylmuramate--L-alanine ligase.